The sequence spans 105 residues: Small ribosomal subunit protein uS10 (105 aa).

This sequence belongs to the universal ribosomal protein uS10 family. As to quaternary structure, part of the 30S ribosomal subunit.

In terms of biological role, involved in the binding of tRNA to the ribosomes. The sequence is that of Small ribosomal subunit protein uS10 from Agathobacter rectalis (strain ATCC 33656 / DSM 3377 / JCM 17463 / KCTC 5835 / VPI 0990) (Eubacterium rectale).